Consider the following 157-residue polypeptide: S-ribosylhomocysteine lyase (157 aa).

Positions 54, 58, and 126 each coordinate Fe cation.

The protein belongs to the LuxS family. Homodimer. Fe cation serves as cofactor.

The enzyme catalyses S-(5-deoxy-D-ribos-5-yl)-L-homocysteine = (S)-4,5-dihydroxypentane-2,3-dione + L-homocysteine. Involved in the synthesis of autoinducer 2 (AI-2) which is secreted by bacteria and is used to communicate both the cell density and the metabolic potential of the environment. The regulation of gene expression in response to changes in cell density is called quorum sensing. Catalyzes the transformation of S-ribosylhomocysteine (RHC) to homocysteine (HC) and 4,5-dihydroxy-2,3-pentadione (DPD). This Bacillus pumilus (strain SAFR-032) protein is S-ribosylhomocysteine lyase.